The primary structure comprises 366 residues: Probable methyltransferase-like protein 24 (366 aa).

The signal sequence occupies residues methionine 1–leucine 29. Residues alanine 36–tryptophan 110 form a disordered region. The span at serine 44–glycine 63 shows a compositional bias: pro residues. A compositionally biased stretch (low complexity) spans threonine 91 to arginine 100.

The protein belongs to the methyltransferase superfamily.

The protein resides in the secreted. Its function is as follows. Probable methyltransferase. The chain is Probable methyltransferase-like protein 24 (METTL24) from Homo sapiens (Human).